The primary structure comprises 384 residues: Ubiquitin-like modifier-activating enzyme 5 (384 aa).

Residues G63, D84, K107, N130, and N164 each coordinate ATP. The Zn(2+) site is built by C206 and C209. The active-site Glycyl thioester intermediate is C230. Residues C283 and C288 each contribute to the Zn(2+) site. A disordered region spans residues 352-375 (EAPEKSSAEATQAATAPVDDTSLE).

The protein belongs to the ubiquitin-activating E1 family. UBA5 subfamily.

E1-like enzyme which activates UFM1. The chain is Ubiquitin-like modifier-activating enzyme 5 from Drosophila persimilis (Fruit fly).